Consider the following 355-residue polypeptide: Ion-translocating oxidoreductase complex subunit D (355 aa).

The next 5 helical transmembrane spans lie at 13–33 (GKLT…ALAV), 35–55 (VYYF…LALI), 77–97 (VILT…YWVI), 98–118 (LIGT…LGQN), and 128–148 (VVLL…ISLL). Threonine 186 is modified (FMN phosphoryl threonine). The next 5 helical transmembrane spans lie at 216 to 236 (AGLG…FLIW), 245 to 265 (PVAI…FGNA), 267 to 287 (AVGF…FFIA), 294 to 314 (PVTP…ICLI), and 318 to 338 (GNYP…VPLI).

The protein belongs to the NqrB/RnfD family. In terms of assembly, the complex is composed of six subunits: RnfA, RnfB, RnfC, RnfD, RnfE and RnfG. Requires FMN as cofactor.

It is found in the cell inner membrane. Functionally, part of a membrane-bound complex that couples electron transfer with translocation of ions across the membrane. The chain is Ion-translocating oxidoreductase complex subunit D from Actinobacillus succinogenes (strain ATCC 55618 / DSM 22257 / CCUG 43843 / 130Z).